Reading from the N-terminus, the 92-residue chain is UPF0223 protein SPCG_1392 (92 aa).

This sequence belongs to the UPF0223 family.

This Streptococcus pneumoniae (strain CGSP14) protein is UPF0223 protein SPCG_1392.